The primary structure comprises 116 residues: Large ribosomal subunit protein bL19 (116 aa).

It belongs to the bacterial ribosomal protein bL19 family.

Functionally, this protein is located at the 30S-50S ribosomal subunit interface and may play a role in the structure and function of the aminoacyl-tRNA binding site. The protein is Large ribosomal subunit protein bL19 of Nocardioides sp. (strain ATCC BAA-499 / JS614).